The primary structure comprises 69 residues: Conotoxin Lt5.10 (69 aa).

The N-terminal stretch at M1–P19 is a signal peptide. The propeptide occupies K20–A54.

Belongs to the conotoxin T superfamily. Post-translationally, contains 2 disulfide bonds that can be either 'C1-C3, C2-C4' or 'C1-C4, C2-C3', since these disulfide connectivities have been observed for conotoxins with cysteine framework V (for examples, see AC P0DQQ7 and AC P81755). As to expression, expressed by the venom duct.

The protein resides in the secreted. The polypeptide is Conotoxin Lt5.10 (Conus litteratus (Lettered cone)).